The sequence spans 1387 residues: DNA-directed RNA polymerase subunit beta'' (1387 aa).

Positions 224, 295, 302, and 305 each coordinate Zn(2+).

Belongs to the RNA polymerase beta' chain family. RpoC2 subfamily. As to quaternary structure, in plastids the minimal PEP RNA polymerase catalytic core is composed of four subunits: alpha, beta, beta', and beta''. When a (nuclear-encoded) sigma factor is associated with the core the holoenzyme is formed, which can initiate transcription. Zn(2+) is required as a cofactor.

The protein localises to the plastid. It is found in the chloroplast. The enzyme catalyses RNA(n) + a ribonucleoside 5'-triphosphate = RNA(n+1) + diphosphate. DNA-dependent RNA polymerase catalyzes the transcription of DNA into RNA using the four ribonucleoside triphosphates as substrates. The protein is DNA-directed RNA polymerase subunit beta'' of Panax ginseng (Korean ginseng).